The primary structure comprises 870 residues: UvrABC system protein B (870 aa).

Residues 20–410 form the Helicase ATP-binding domain; sequence EGVDNNDRTQ…VFAEQVIRPT (391 aa). Residue 33 to 40 participates in ATP binding; sequence GVTGSGKT. A Beta-hairpin motif is present at residues 86 to 109; the sequence is YYDYYQPEAYVPRTDTFIEKESSI. The 167-residue stretch at 425–591 folds into the Helicase C-terminal domain; that stretch reads QVDDVVGEIR…SVKSRISDIL (167 aa). Positions 620–655 constitute a UVR domain; the sequence is KAHLDAMEKQMRDAAANLDFEKAARIRDEIKRLREM. Disordered stretches follow at residues 671-698 and 741-870; these read ESPVSGREKGKHNKGVAKHRTAEEQERF and AKPS…RPGK. The span at 679-689 shows a compositional bias: basic residues; sequence KGKHNKGVAKH. 2 stretches are compositionally biased toward basic and acidic residues: residues 793–808 and 827–836; these read NSLDEMTVRRTEKPVE and TDVKDRDDSA. Residues 858-870 show a composition bias toward basic residues; that stretch reads EKRRPGKTGRPGK.

Belongs to the UvrB family. Forms a heterotetramer with UvrA during the search for lesions. Interacts with UvrC in an incision complex.

It is found in the cytoplasm. The UvrABC repair system catalyzes the recognition and processing of DNA lesions. A damage recognition complex composed of 2 UvrA and 2 UvrB subunits scans DNA for abnormalities. Upon binding of the UvrA(2)B(2) complex to a putative damaged site, the DNA wraps around one UvrB monomer. DNA wrap is dependent on ATP binding by UvrB and probably causes local melting of the DNA helix, facilitating insertion of UvrB beta-hairpin between the DNA strands. Then UvrB probes one DNA strand for the presence of a lesion. If a lesion is found the UvrA subunits dissociate and the UvrB-DNA preincision complex is formed. This complex is subsequently bound by UvrC and the second UvrB is released. If no lesion is found, the DNA wraps around the other UvrB subunit that will check the other stand for damage. This is UvrABC system protein B from Mesorhizobium japonicum (strain LMG 29417 / CECT 9101 / MAFF 303099) (Mesorhizobium loti (strain MAFF 303099)).